The primary structure comprises 301 residues: Negative regulator of the PHO system (301 aa).

Residues 7–297 (FKQLERLGNG…AQQALSHPLF (291 aa)) enclose the Protein kinase domain. ATP contacts are provided by residues 13-21 (LGNGTYATV) and Lys36. Asp133 serves as the catalytic Proton acceptor.

Belongs to the protein kinase superfamily. CMGC Ser/Thr protein kinase family. CDC2/CDKX subfamily. As to quaternary structure, interacts with a number of cyclins.

The enzyme catalyses L-seryl-[protein] + ATP = O-phospho-L-seryl-[protein] + ADP + H(+). It catalyses the reaction L-threonyl-[protein] + ATP = O-phospho-L-threonyl-[protein] + ADP + H(+). When phosphate concentrations are high it phosphorylates the PHO4 transcription factor thus establishing repression. This is Negative regulator of the PHO system (PHO85) from Eremothecium gossypii (strain ATCC 10895 / CBS 109.51 / FGSC 9923 / NRRL Y-1056) (Yeast).